Reading from the N-terminus, the 301-residue chain is Formamidopyrimidine-DNA glycosylase (301 aa).

Pro-2 functions as the Schiff-base intermediate with DNA in the catalytic mechanism. Glu-3 (proton donor) is an active-site residue. Lys-58 (proton donor; for beta-elimination activity) is an active-site residue. Positions 109, 131, and 174 each coordinate DNA. The segment at 265-301 (SVYDREGQACRTPGCGGTVARIVQAGRSTFYCATCQK) adopts an FPG-type zinc-finger fold. Arg-291 functions as the Proton donor; for delta-elimination activity in the catalytic mechanism.

The protein belongs to the FPG family. Monomer. Zn(2+) is required as a cofactor.

The catalysed reaction is Hydrolysis of DNA containing ring-opened 7-methylguanine residues, releasing 2,6-diamino-4-hydroxy-5-(N-methyl)formamidopyrimidine.. It carries out the reaction 2'-deoxyribonucleotide-(2'-deoxyribose 5'-phosphate)-2'-deoxyribonucleotide-DNA = a 3'-end 2'-deoxyribonucleotide-(2,3-dehydro-2,3-deoxyribose 5'-phosphate)-DNA + a 5'-end 5'-phospho-2'-deoxyribonucleoside-DNA + H(+). Involved in base excision repair of DNA damaged by oxidation or by mutagenic agents. Acts as a DNA glycosylase that recognizes and removes damaged bases. Has a preference for oxidized purines, such as 7,8-dihydro-8-oxoguanine (8-oxoG). Has AP (apurinic/apyrimidinic) lyase activity and introduces nicks in the DNA strand. Cleaves the DNA backbone by beta-delta elimination to generate a single-strand break at the site of the removed base with both 3'- and 5'-phosphates. This is Formamidopyrimidine-DNA glycosylase from Rhizobium leguminosarum bv. trifolii (strain WSM2304).